We begin with the raw amino-acid sequence, 790 residues long: Ice-structuring glycoprotein (790 aa).

The propeptide occupies 1–5; sequence VTAAP.

Post-translationally, O-glycosylated; contains disaccharide galactose-N-acetylgalactosamine attached to threonines in AFGP8 and AFGP7. Synthesized by the liver and secreted into the blood from which they become distributed to almost the entire extracellular space.

It is found in the secreted. In terms of biological role, antifreeze proteins lower the blood freezing point. The sequence is that of Ice-structuring glycoprotein (afgp8) from Notothenia neglecta (Yellowbelly rockcod).